A 338-amino-acid polypeptide reads, in one-letter code: RNA 3'-terminal phosphate cyclase (338 aa).

ATP contacts are provided by residues Q103 and Y283 to Q287. The active-site Tele-AMP-histidine intermediate is the H308.

It belongs to the RNA 3'-terminal cyclase family. Type 1 subfamily.

The protein resides in the cytoplasm. The catalysed reaction is a 3'-end 3'-phospho-ribonucleotide-RNA + ATP = a 3'-end 2',3'-cyclophospho-ribonucleotide-RNA + AMP + diphosphate. Catalyzes the conversion of 3'-phosphate to a 2',3'-cyclic phosphodiester at the end of RNA. The mechanism of action of the enzyme occurs in 3 steps: (A) adenylation of the enzyme by ATP; (B) transfer of adenylate to an RNA-N3'P to produce RNA-N3'PP5'A; (C) and attack of the adjacent 2'-hydroxyl on the 3'-phosphorus in the diester linkage to produce the cyclic end product. The biological role of this enzyme is unknown but it is likely to function in some aspects of cellular RNA processing. This Escherichia coli O45:K1 (strain S88 / ExPEC) protein is RNA 3'-terminal phosphate cyclase.